Reading from the N-terminus, the 520-residue chain is Ribonuclease Y (520 aa).

A helical transmembrane segment spans residues 4–24 (VSGILLVLIGLLAGVGLGVLL). In terms of domain architecture, KH spans 210 to 270 (TVSVVNLPNE…VRREVARVSL (61 aa)). Residues 336–429 (VLQHSREVAF…VQAADALSGA (94 aa)) enclose the HD domain.

Belongs to the RNase Y family.

It is found in the cell membrane. Its function is as follows. Endoribonuclease that initiates mRNA decay. The sequence is that of Ribonuclease Y from Syntrophobacter fumaroxidans (strain DSM 10017 / MPOB).